A 234-amino-acid polypeptide reads, in one-letter code: Putative methyltransferase-like protein 15P1 (234 aa).

S-adenosyl-L-methionine contacts are provided by residues 100–102, aspartate 119, phenylalanine 146, aspartate 169, and glutamine 176; that span reads GGH.

This sequence belongs to the methyltransferase superfamily. RsmH family.

Probable S-adenosyl-L-methionine-dependent methyltransferase. The polypeptide is Putative methyltransferase-like protein 15P1 (METTL15P1) (Homo sapiens (Human)).